Reading from the N-terminus, the 668-residue chain is MKHYSIQPANLEFNAEGTPVSRDFDDVYFSNDNGLEETRYVFLGGNQLEVRFPEHPHPLFVVAESGFGTGLNFLTLWQAFDQFREAHPQAQLQRLHFISFEKFPLTRADLALAHQHWPELAPWAEQLQAQWPMPLPGCHRLLLDEGRVTLDLWFGDINELTSQLDDSLNQKVDAWFLDGFAPAKNPDMWTQNLFNAMARLARPGGTLATFTSAGFVRRGLQDAGFTMQKRKGFGRKREMLCGVMEQTLPLPCSAPWFNRTGSSKREAAIIGGGIACALLSLALLRRGWQVTLYCADEAPALGASGNRQGALYPLLSKHDEALNRFFSNAFTFARRFYDQLPVKFDHDWCGVTQLGWDEKSQHKITQMLSMDLPAELAVAVEANAVEQITGVATNCSGITYPQGGWLCPAELTRNVLELAQQQGLQIYYQYQLQNLSRKDDCWLLNFAGDQQATHSVVVLANGHQISRFSQTSTLPVYSVAGQVSHIPTTPELAELKQVLCYDGYLTPQNPANQHHCIGASYHRGSEDTAYSEDDQQQNRQRLIDCFPQAQWAKEVDVSDKEARCGVRCATRDHLPMVGNVPDYEATLVEYASLAEQKDEAVSAPVFDDLFMFAALGSRGLCSAPLCAEILAAQMSDEPIPMDASTLAALNPNRLWVRKLLKGKAVKAG.

The interval 1 to 245 is tRNA (mnm(5)s(2)U34)-methyltransferase; that stretch reads MKHYSIQPAN…KREMLCGVME (245 aa). Residues 270 to 668 form an FAD-dependent cmnm(5)s(2)U34 oxidoreductase region; it reads IGGGIACALL…LLKGKAVKAG (399 aa).

The protein in the N-terminal section; belongs to the methyltransferase superfamily. tRNA (mnm(5)s(2)U34)-methyltransferase family. This sequence in the C-terminal section; belongs to the DAO family. FAD is required as a cofactor.

The protein localises to the cytoplasm. It catalyses the reaction 5-aminomethyl-2-thiouridine(34) in tRNA + S-adenosyl-L-methionine = 5-methylaminomethyl-2-thiouridine(34) in tRNA + S-adenosyl-L-homocysteine + H(+). Catalyzes the last two steps in the biosynthesis of 5-methylaminomethyl-2-thiouridine (mnm(5)s(2)U) at the wobble position (U34) in tRNA. Catalyzes the FAD-dependent demodification of cmnm(5)s(2)U34 to nm(5)s(2)U34, followed by the transfer of a methyl group from S-adenosyl-L-methionine to nm(5)s(2)U34, to form mnm(5)s(2)U34. This is tRNA 5-methylaminomethyl-2-thiouridine biosynthesis bifunctional protein MnmC from Shigella boydii serotype 18 (strain CDC 3083-94 / BS512).